The sequence spans 376 residues: Protein-glutamate methylesterase/protein-glutamine glutaminase 1 (376 aa).

Residues 4–121 (KVLVVDDSSF…ARNRDEAVSL (118 aa)) enclose the Response regulatory domain. A 4-aspartylphosphate modification is found at Asp-55. Residues 138–169 (RPVASSTPVQERPQSTLNRPTTGLRREASAQA) are disordered. Residues 141-158 (ASSTPVQERPQSTLNRPT) show a composition bias toward polar residues. The 194-residue stretch at 183–376 (SGKKYQLTAI…ERMLVEVGLA (194 aa)) folds into the CheB-type methylesterase domain. Residues Ser-195, His-222, and Asp-318 contribute to the active site.

It belongs to the CheB family. Post-translationally, phosphorylated by CheA. Phosphorylation of the N-terminal regulatory domain activates the methylesterase activity.

The protein localises to the cytoplasm. The catalysed reaction is [protein]-L-glutamate 5-O-methyl ester + H2O = L-glutamyl-[protein] + methanol + H(+). It catalyses the reaction L-glutaminyl-[protein] + H2O = L-glutamyl-[protein] + NH4(+). Involved in chemotaxis. Part of a chemotaxis signal transduction system that modulates chemotaxis in response to various stimuli. Catalyzes the demethylation of specific methylglutamate residues introduced into the chemoreceptors (methyl-accepting chemotaxis proteins or MCP) by CheR. Also mediates the irreversible deamidation of specific glutamine residues to glutamic acid. The protein is Protein-glutamate methylesterase/protein-glutamine glutaminase 1 of Vibrio vulnificus (strain YJ016).